The primary structure comprises 54 residues: Pars intercerebralis major peptide D1 (54 aa).

This sequence belongs to the granulin family. In terms of processing, six disulfide bonds are present. In terms of tissue distribution, brain.

It is found in the secreted. The chain is Pars intercerebralis major peptide D1 from Locusta migratoria (Migratory locust).